The sequence spans 342 residues: Sideroflexin-5 (342 aa).

Over residues 1–24 (MADTATTASAASAAASASNASSDA) the composition is skewed to low complexity. Positions 1-29 (MADTATTASAASAAASASNASSDAPPFQL) are disordered. The next 4 helical transmembrane spans lie at 105–125 (IFMP…VVGL), 165–185 (FIQG…GLNV), 256–276 (LTRV…MSML), and 289–309 (LLPV…PLAI).

The protein belongs to the sideroflexin family. As to expression, specifically expressed in the brain.

It localises to the mitochondrion inner membrane. It carries out the reaction citrate(in) = citrate(out). Functionally, mitochondrial amino-acid transporter. Transports citrate. Does not act as a serine transporter: not able to mediate transport of serine into mitochondria. In brown adipose tissue, plays a role in the regulation of UCP1-dependent thermogenesis probably by supporting mitochondrial glycerol-3-phosphate utilization. This is Sideroflexin-5 from Rattus norvegicus (Rat).